A 242-amino-acid polypeptide reads, in one-letter code: Segregation and condensation protein A (242 aa).

It belongs to the ScpA family. As to quaternary structure, component of a cohesin-like complex composed of ScpA, ScpB and the Smc homodimer, in which ScpA and ScpB bind to the head domain of Smc. The presence of the three proteins is required for the association of the complex with DNA.

It localises to the cytoplasm. Functionally, participates in chromosomal partition during cell division. May act via the formation of a condensin-like complex containing Smc and ScpB that pull DNA away from mid-cell into both cell halves. This Streptococcus pneumoniae serotype 4 (strain ATCC BAA-334 / TIGR4) protein is Segregation and condensation protein A.